The primary structure comprises 238 residues: Small proline-rich protein 3 (238 aa).

The tract at residues 1–67 is disordered; the sequence is MSSYQQKQPF…CSTKVPEPGN (67 aa). N-acetylserine is present on serine 2. Tandem repeats lie at residues 52–59, 60–67, 68–75, 76–83, 84–91, 92–99, 100–107, 108–115, 116–123, 124–131, 132–139, 140–147, 148–155, 156–163, 164–175, 176–183, 184–191, 192–199, 200–207, 208–215, and 216–223. Positions 52-223 are 21 X 8 AA approximate tandem repeats; that stretch reads TKIPEPCSTK…CQSRVPEVCP (172 aa). The segment at 110–238 is disordered; that stretch reads IPGPCSTNIP…VSAKQKTKQK (129 aa). Low complexity predominate over residues 163-175; that stretch reads PSSTSEPSSEPCS.

This sequence belongs to the cornifin (SPRR) family.

It is found in the cytoplasm. Its function is as follows. Cross-linked envelope protein of keratinocytes. The protein is Small proline-rich protein 3 (Sprr3) of Mus musculus (Mouse).